A 258-amino-acid polypeptide reads, in one-letter code: MKCFQKLYIFILILIVLMAGCESNKITGDSKETQIKKSFAKTLDVYPTKNLEDFYDKEGYRDGEFKKGDKGKWVIRSEMTTELKNENMVSKGMVIRLNRNSRTCTGEYFVRIVKEDSEGKVYSDERKYPVKMENNKIITLKPIDDEKVKKEIEEFKFFVQYGNFKELENYKDGEVTYNPEAPIYSAQYQLKNSDYNVEQLRKRYNITTKKAPKLLLKGSGNLKGSSVGYKNIEFTFVENKEENIYFTDSINFNPSEDK.

Positions Met1 to Gly20 are cleaved as a signal peptide. Cys21 is lipidated: N-palmitoyl cysteine. Cys21 is lipidated: S-diacylglycerol cysteine.

This sequence belongs to the staphylococcal tandem lipoprotein family.

It localises to the cell membrane. This is an uncharacterized protein from Staphylococcus aureus (strain COL).